A 353-amino-acid chain; its full sequence is MTIALGKFTKDEKDLFDIMDDWLRRDRFVFVGWSGLLLFPCAYFALGGWFTGTTFVTSWYTHGLASSYLEGCNFLTAAVSTPANSLSHSLLLLWGPEAQGDFTRWCQLGGLWTFVALHGAFGLIGFMLRQFELARSVQLRPYNAIAFSGPIAVFVSVFLIYPLGQSGWFFAPSFGVAAIFRFILFFQGFHNWTLNPFHMMGVAGVLGAALLCAIHGATVENTLFEDGDGANTFRAFNPTQAEETYSMVTANRFWSQIFGVAFSNKRWLHFFMLFVPVTGLWMSALGVVGLALNLRAYDFVSQEIRAAEDPEFETFYTKNILLNEGIRAWMAAQDQPHENLIFPEEVLPRGNAL.

N-acetylthreonine is present on T2. At T2 the chain carries Phosphothreonine. The chain crosses the membrane as a helical span at residues 41–61; the sequence is CAYFALGGWFTGTTFVTSWYT. Position 118 (H118) interacts with chlorophyll a. The helical transmembrane segment at 125–141 threads the bilayer; it reads GFMLRQFELARSVQLRP. Q130 and N143 together coordinate pheophytin a. Residues 153 to 166 form a helical membrane-spanning segment; sequence VFVSVFLIYPLGQS. Residue H198 coordinates chlorophyll a. Residues 208-228 traverse the membrane as a helical segment; sequence AALLCAIHGATVENTLFEDGD. The a plastoquinone site is built by H215 and F262. Residue H215 participates in Fe cation binding. H269 provides a ligand contact to Fe cation. Residues 279-295 form a helical membrane-spanning segment; the sequence is GLWMSALGVVGLALNLR.

Belongs to the reaction center PufL/M/PsbA/D family. As to quaternary structure, PSII is composed of 1 copy each of membrane proteins PsbA, PsbB, PsbC, PsbD, PsbE, PsbF, PsbH, PsbI, PsbJ, PsbK, PsbL, PsbM, PsbT, PsbX, PsbY, PsbZ, Psb30/Ycf12, at least 3 peripheral proteins of the oxygen-evolving complex and a large number of cofactors. It forms dimeric complexes. The cofactor is The D1/D2 heterodimer binds P680, chlorophylls that are the primary electron donor of PSII, and subsequent electron acceptors. It shares a non-heme iron and each subunit binds pheophytin, quinone, additional chlorophylls, carotenoids and lipids. There is also a Cl(-1) ion associated with D1 and D2, which is required for oxygen evolution. The PSII complex binds additional chlorophylls, carotenoids and specific lipids..

It localises to the plastid. It is found in the chloroplast thylakoid membrane. The enzyme catalyses 2 a plastoquinone + 4 hnu + 2 H2O = 2 a plastoquinol + O2. Its function is as follows. Photosystem II (PSII) is a light-driven water:plastoquinone oxidoreductase that uses light energy to abstract electrons from H(2)O, generating O(2) and a proton gradient subsequently used for ATP formation. It consists of a core antenna complex that captures photons, and an electron transfer chain that converts photonic excitation into a charge separation. The D1/D2 (PsbA/PsbD) reaction center heterodimer binds P680, the primary electron donor of PSII as well as several subsequent electron acceptors. D2 is needed for assembly of a stable PSII complex. The sequence is that of Photosystem II D2 protein from Phaseolus vulgaris (Kidney bean).